The sequence spans 606 residues: Proline--tRNA ligase (606 aa).

This sequence belongs to the class-II aminoacyl-tRNA synthetase family. ProS type 1 subfamily. As to quaternary structure, homodimer.

The protein resides in the cytoplasm. It catalyses the reaction tRNA(Pro) + L-proline + ATP = L-prolyl-tRNA(Pro) + AMP + diphosphate. Catalyzes the attachment of proline to tRNA(Pro) in a two-step reaction: proline is first activated by ATP to form Pro-AMP and then transferred to the acceptor end of tRNA(Pro). As ProRS can inadvertently accommodate and process non-cognate amino acids such as alanine and cysteine, to avoid such errors it has two additional distinct editing activities against alanine. One activity is designated as 'pretransfer' editing and involves the tRNA(Pro)-independent hydrolysis of activated Ala-AMP. The other activity is designated 'posttransfer' editing and involves deacylation of mischarged Ala-tRNA(Pro). The misacylated Cys-tRNA(Pro) is not edited by ProRS. This is Proline--tRNA ligase from Kocuria rhizophila (strain ATCC 9341 / DSM 348 / NBRC 103217 / DC2201).